Here is a 210-residue protein sequence, read N- to C-terminus: Glycerol-3-phosphate acyltransferase (210 aa).

5 helical membrane-spanning segments follow: residues 10–30 (ALIL…GIVI), 59–79 (PAAL…VLIA), 87–107 (AAQL…WLGF), 116–136 (FLGT…LTWL), and 161–181 (LLLG…LIFI).

This sequence belongs to the PlsY family. Probably interacts with PlsX.

The protein localises to the cell inner membrane. It carries out the reaction an acyl phosphate + sn-glycerol 3-phosphate = a 1-acyl-sn-glycero-3-phosphate + phosphate. Its pathway is lipid metabolism; phospholipid metabolism. In terms of biological role, catalyzes the transfer of an acyl group from acyl-phosphate (acyl-PO(4)) to glycerol-3-phosphate (G3P) to form lysophosphatidic acid (LPA). This enzyme utilizes acyl-phosphate as fatty acyl donor, but not acyl-CoA or acyl-ACP. The chain is Glycerol-3-phosphate acyltransferase from Cereibacter sphaeroides (strain ATCC 17025 / ATH 2.4.3) (Rhodobacter sphaeroides).